We begin with the raw amino-acid sequence, 266 residues long: Undecaprenyl-diphosphatase (266 aa).

Helical transmembrane passes span 1–21, 43–63, 81–101, 107–127, 145–165, 183–203, 219–239, and 245–265; these read MMSW…TEFL, ASVF…VIYW, LYGI…GFLF, TLFT…FMLI, LTPK…WPGF, HLAA…ATGY, LFIT…KVFI, and ISLR…YLCI.

The protein belongs to the UppP family.

It localises to the cell membrane. It catalyses the reaction di-trans,octa-cis-undecaprenyl diphosphate + H2O = di-trans,octa-cis-undecaprenyl phosphate + phosphate + H(+). Catalyzes the dephosphorylation of undecaprenyl diphosphate (UPP). Confers resistance to bacitracin. This chain is Undecaprenyl-diphosphatase, found in Lawsonia intracellularis (strain PHE/MN1-00).